The following is a 125-amino-acid chain: Large ribosomal subunit protein bL12 (125 aa).

The protein belongs to the bacterial ribosomal protein bL12 family. In terms of assembly, homodimer. Part of the ribosomal stalk of the 50S ribosomal subunit. Forms a multimeric L10(L12)X complex, where L10 forms an elongated spine to which 2 to 4 L12 dimers bind in a sequential fashion. Binds GTP-bound translation factors.

In terms of biological role, forms part of the ribosomal stalk which helps the ribosome interact with GTP-bound translation factors. Is thus essential for accurate translation. The chain is Large ribosomal subunit protein bL12 from Heliobacterium modesticaldum (strain ATCC 51547 / Ice1).